A 1207-amino-acid chain; its full sequence is GGCYQSCEPHTLKCGSVSFEAKCKSGWSCYPVTDNIASNACDRFKSCQDRWATVKETDAPCTSCVPGFQLTSRGYCSQDLNECNRNNGGCTNGKCINTEGSYHCDCDRGYLATSSRTKCEGVECEPLTLANGKVQSNKGSWIFGSRALFTCDDQARSVLDGPSYITCNLDAAGLTASWSGTSPTCQNDDEHDRFAEVFHLRFHGKKLDGVSLVTGLSPRSTAYRCHKDSTCQGIMTRAEEFEVSATGLTVYDGGVLTKTLGQSRADGDALTDDASMDIYTKVDVSSAAASSYQDVLDAMVGTSLGCYTTSSMASWEDYTLDDGRATTCNQICLQAGYDYFGIQASDKCWCGQKPPVEKVGDGECSTVCVNQANILCGSATTANIYQVYRDRSLGFCYTGNLGTETVPSAKTKDECVTVCRGQGYYTANIRNSGECFCDNSLPGGPRVDPTKCDEDGSGHSTVYMTNPAYFMSNDQGAQINPMTTRMYDDTGSVTGMTTGLFQRLPGLRIFTSDRLVLYSAEEVQFHDVQNDYADTCGEIKRIDGESDRSGDLILHFFHFRLSQLAKHTSDRASRVYIYAQKVVIDCDIQVQFSLMIRATKIVVSTGKVFKILVGSESSQIEMDVDDVKNNGPPRNLQQMKDSLQCARMLAQSWDDTEKQKLAFNILHEMTSPTAGNEAQRSVQTMASALKLQLEGMFKNDIHHVPSYSAAYFTYLMKADSDIVNAYAARLNALEVITTSRDDFLNYTQELEKIHQDTSIAQAKKRFDETMKLYKKEDLVYTKLQAAYDTALTNLRGVIPTFRKSIEAQEDHLRFKALLSFLELGVAAMDPAAVASVSKGFYDDVTDIAASSIWGIDQVVTNIDSFTDVMTNNLNEMMSEVKPYDGTKYAYEIEKVANMHVFVEEWRNFQVEVNNILGDDTVSALGGAGDYGRNLVKLTNIGMALTNAMINRAEKTRDAAQKRTTWDLLVEQGRRTTEVIKGFKAANSERAAANSVVAEQIRDITSEINGDLANFCEAYFFEKLEPCPKSTQPRFGGDLLSVQLSISRAEREAASLGLDGSPVSREVTITNTDASEDCIDVTQCPVTVFKRDRAFSYEVPIDNFDLSDWDKYRVKEIEVKAIGATPDRTETDLKLFVRSSGSFSGKSGGTHYNFLTDDFFCVYEYDINSPIDAPPESASGRCTVYARGSKKDMTRYATPYAAWMIEVD.

The EGF-like domain maps to 79-120 (DLNECNRNNGGCTNGKCINTEGSYHCDCDRGYLATSSRTKCE). 5 disulfides stabilise this stretch: C83–C95, C90–C104, C106–C119, C124–C167, and C151–C185. The region spanning 122–187 (VECEPLTLAN…WSGTSPTCQN (66 aa)) is the Sushi domain. 2 consecutive WSC domains span residues 300–391 (VGTS…YRDR) and 392–476 (SLGF…NDQG). N-linked (GlcNAc...) asparagine glycosylation is present at N745.

As to quaternary structure, dimer; probably disulfide-linked. Interacts with Cav2.2/CACNA1B calcium channel. As to expression, expressed exclusively in the four pharyngeal lobes and in tissue located at the base of the teeth. No distinct expression is visible in the putative venom glands or elsewhere in the pharynx.

It is found in the secreted. In terms of biological role, potent venom presynaptic neurotoxin that promotes a long-lasting increase in spontaneous neurotransmitter release at the peripheral and central synapses by selective activation of Cav2.2/CACNA1B (N-type) channels. In addition, it drastically enhances synaptic-vesicle recycling, an effect that is prevented by the Cav2.2-specific inhibitor conotoxin-MVIIA. It activates Cav2.2/CACNA1B by shifting the current-voltage relationship of channels towards more hyperpolarized potentiels in a reversible manner. May have two separate sites of action on Cav2.2: one high affinity linked to changes in gating properties, and a second low affinity that results in block of current activity. The polypeptide is Glycerotoxin paralog 1 (Glycera tridactyla (Glycerine worm)).